Reading from the N-terminus, the 257-residue chain is Hydroxyacylglutathione hydrolase (257 aa).

Zn(2+) is bound by residues His-54, His-56, Asp-58, His-59, His-113, Asp-137, and His-175.

The protein belongs to the metallo-beta-lactamase superfamily. Glyoxalase II family. In terms of assembly, monomer. It depends on Zn(2+) as a cofactor.

It carries out the reaction an S-(2-hydroxyacyl)glutathione + H2O = a 2-hydroxy carboxylate + glutathione + H(+). It participates in secondary metabolite metabolism; methylglyoxal degradation; (R)-lactate from methylglyoxal: step 2/2. In terms of biological role, thiolesterase that catalyzes the hydrolysis of S-D-lactoyl-glutathione to form glutathione and D-lactic acid. In Nostoc sp. (strain PCC 7120 / SAG 25.82 / UTEX 2576), this protein is Hydroxyacylglutathione hydrolase.